A 525-amino-acid polypeptide reads, in one-letter code: GMP synthase [glutamine-hydrolyzing] (525 aa).

The 199-residue stretch at 9-207 (RILILDFGSQ…VRDICQCEAL (199 aa)) folds into the Glutamine amidotransferase type-1 domain. Cys-86 serves as the catalytic Nucleophile. Active-site residues include His-181 and Glu-183. In terms of domain architecture, GMPS ATP-PPase spans 208–400 (WTPAKIIDDA…LGLPYDMLYR (193 aa)). 235–241 (SGGVDSS) serves as a coordination point for ATP.

As to quaternary structure, homodimer.

The catalysed reaction is XMP + L-glutamine + ATP + H2O = GMP + L-glutamate + AMP + diphosphate + 2 H(+). It participates in purine metabolism; GMP biosynthesis; GMP from XMP (L-Gln route): step 1/1. Its function is as follows. Catalyzes the synthesis of GMP from XMP. This chain is GMP synthase [glutamine-hydrolyzing], found in Escherichia coli O17:K52:H18 (strain UMN026 / ExPEC).